A 373-amino-acid chain; its full sequence is 3-dehydroquinate synthase (373 aa).

NAD(+) is bound by residues glutamate 67–lysine 72, glycine 101–aspartate 105, threonine 125–threonine 126, lysine 138, and lysine 147. Zn(2+)-binding residues include glutamate 180, histidine 240, and histidine 256.

Belongs to the sugar phosphate cyclases superfamily. Dehydroquinate synthase family. It depends on NAD(+) as a cofactor. The cofactor is Co(2+). Zn(2+) serves as cofactor.

The protein localises to the cytoplasm. It catalyses the reaction 7-phospho-2-dehydro-3-deoxy-D-arabino-heptonate = 3-dehydroquinate + phosphate. Its pathway is metabolic intermediate biosynthesis; chorismate biosynthesis; chorismate from D-erythrose 4-phosphate and phosphoenolpyruvate: step 2/7. Catalyzes the conversion of 3-deoxy-D-arabino-heptulosonate 7-phosphate (DAHP) to dehydroquinate (DHQ). The protein is 3-dehydroquinate synthase (aroB) of Chlamydia muridarum (strain MoPn / Nigg).